Reading from the N-terminus, the 100-residue chain is Urease subunit gamma (100 aa).

The protein belongs to the urease gamma subunit family. Heterotrimer of UreA (gamma), UreB (beta) and UreC (alpha) subunits. Three heterotrimers associate to form the active enzyme.

The protein resides in the cytoplasm. It carries out the reaction urea + 2 H2O + H(+) = hydrogencarbonate + 2 NH4(+). It functions in the pathway nitrogen metabolism; urea degradation; CO(2) and NH(3) from urea (urease route): step 1/1. The sequence is that of Urease subunit gamma from Marinobacter nauticus (strain ATCC 700491 / DSM 11845 / VT8) (Marinobacter aquaeolei).